The chain runs to 120 residues: Putative defensin-like protein 179 (120 aa).

A signal peptide spans 1–27 (MERTSTSLLFLLSLLIIFASAVNQIRA). Disulfide bonds link Cys37–Cys56, Cys40–Cys63, Cys44–Cys65, Cys74–Cys120, Cys85–Cys105, Cys90–Cys114, and Cys94–Cys116.

The protein belongs to the DEFL family.

The protein resides in the secreted. In Arabidopsis thaliana (Mouse-ear cress), this protein is Putative defensin-like protein 179 (LCR57).